A 278-amino-acid polypeptide reads, in one-letter code: Diaminopimelate epimerase (278 aa).

Residues asparagine 13, glutamine 49, and asparagine 68 each contribute to the substrate site. Catalysis depends on cysteine 77, which acts as the Proton donor. Substrate contacts are provided by residues 78–79 (GN), asparagine 161, asparagine 194, and 212–213 (ER). Cysteine 221 acts as the Proton acceptor in catalysis. 222–223 (GT) is a binding site for substrate.

Belongs to the diaminopimelate epimerase family. As to quaternary structure, homodimer.

The protein localises to the cytoplasm. The catalysed reaction is (2S,6S)-2,6-diaminopimelate = meso-2,6-diaminopimelate. Its pathway is amino-acid biosynthesis; L-lysine biosynthesis via DAP pathway; DL-2,6-diaminopimelate from LL-2,6-diaminopimelate: step 1/1. Functionally, catalyzes the stereoinversion of LL-2,6-diaminopimelate (L,L-DAP) to meso-diaminopimelate (meso-DAP), a precursor of L-lysine and an essential component of the bacterial peptidoglycan. This is Diaminopimelate epimerase from Nitrosomonas eutropha (strain DSM 101675 / C91 / Nm57).